Consider the following 138-residue polypeptide: Putative nickel-responsive regulator (138 aa).

The Ni(2+) site is built by His78, His89, His91, and Cys97.

This sequence belongs to the transcriptional regulatory CopG/NikR family. The cofactor is Ni(2+).

In terms of biological role, transcriptional regulator. This is Putative nickel-responsive regulator from Thermococcus onnurineus (strain NA1).